Here is a 130-residue protein sequence, read N- to C-terminus: Large ribosomal subunit protein eL34 (130 aa).

The segment at 111 to 130 (KPVSKPPKIQKTAKAASKSK) is disordered.

It belongs to the eukaryotic ribosomal protein eL34 family.

This is Large ribosomal subunit protein eL34 (RpL34) from Aedes albopictus (Asian tiger mosquito).